A 423-amino-acid chain; its full sequence is Histidine--tRNA ligase (423 aa).

This sequence belongs to the class-II aminoacyl-tRNA synthetase family. Homodimer.

It is found in the cytoplasm. The catalysed reaction is tRNA(His) + L-histidine + ATP = L-histidyl-tRNA(His) + AMP + diphosphate + H(+). This is Histidine--tRNA ligase (hisS) from Pasteurella multocida (strain Pm70).